Reading from the N-terminus, the 205-residue chain is Small ribosomal subunit protein uS4 (205 aa).

The tract at residues 19–45 (IWGRPKSPVNRREYGPGQHGQRRKGKL) is disordered. The S4 RNA-binding domain occupies 94-157 (SRLDAVVYRA…KQLAIVLEAV (64 aa)).

The protein belongs to the universal ribosomal protein uS4 family. In terms of assembly, part of the 30S ribosomal subunit. Contacts protein S5. The interaction surface between S4 and S5 is involved in control of translational fidelity.

Its function is as follows. One of the primary rRNA binding proteins, it binds directly to 16S rRNA where it nucleates assembly of the body of the 30S subunit. With S5 and S12 plays an important role in translational accuracy. The protein is Small ribosomal subunit protein uS4 of Brucella suis biovar 1 (strain 1330).